A 110-amino-acid chain; its full sequence is Large ribosomal subunit protein uL22 (110 aa).

Belongs to the universal ribosomal protein uL22 family. As to quaternary structure, part of the 50S ribosomal subunit.

Its function is as follows. This protein binds specifically to 23S rRNA; its binding is stimulated by other ribosomal proteins, e.g. L4, L17, and L20. It is important during the early stages of 50S assembly. It makes multiple contacts with different domains of the 23S rRNA in the assembled 50S subunit and ribosome. Functionally, the globular domain of the protein is located near the polypeptide exit tunnel on the outside of the subunit, while an extended beta-hairpin is found that lines the wall of the exit tunnel in the center of the 70S ribosome. In Yersinia pseudotuberculosis serotype O:1b (strain IP 31758), this protein is Large ribosomal subunit protein uL22.